The sequence spans 337 residues: Gastrula zinc finger protein XlCGF26.1 (337 aa).

12 C2H2-type zinc fingers span residues 6 to 28 (FDCTECGKSFTDLKTLQHHYKIH), 34 to 56 (FICAECGKGFNQKTTLLNHSKIH), 62 to 84 (FPCTECGKCFTERKTLLNHNKIH), 90 to 112 (FICAECGIGFTQKTTLLNHSKIH), 118 to 140 (FPCTECGKCFTERKTLLNHNKIH), 146 to 168 (FICAECGIGFTQKTTLLNHSKIH), 174 to 196 (FPCTECGKCFAEKKTLQNHNKIH), 202 to 224 (FTCTDCGKSFTQRTSLQNHVKIH), 230 to 252 (FTCTECGKSFSEKKTLREHNKIH), 258 to 280 (FTCTYCGKSFSQRISLQNHFKIH), 286 to 309 (FSCTECGKCFTIKSTLQSHLKRTH), and 315 to 337 (FTCTECGKSFTKKKILLKHNKIH).

The protein belongs to the krueppel C2H2-type zinc-finger protein family.

It is found in the nucleus. In terms of biological role, may be involved in transcriptional regulation. The protein is Gastrula zinc finger protein XlCGF26.1 of Xenopus laevis (African clawed frog).